Consider the following 345-residue polypeptide: S-adenosylmethionine:tRNA ribosyltransferase-isomerase (345 aa).

This sequence belongs to the QueA family. In terms of assembly, monomer.

It is found in the cytoplasm. The enzyme catalyses 7-aminomethyl-7-carbaguanosine(34) in tRNA + S-adenosyl-L-methionine = epoxyqueuosine(34) in tRNA + adenine + L-methionine + 2 H(+). It functions in the pathway tRNA modification; tRNA-queuosine biosynthesis. Functionally, transfers and isomerizes the ribose moiety from AdoMet to the 7-aminomethyl group of 7-deazaguanine (preQ1-tRNA) to give epoxyqueuosine (oQ-tRNA). The polypeptide is S-adenosylmethionine:tRNA ribosyltransferase-isomerase (Shewanella sp. (strain MR-4)).